The following is a 717-amino-acid chain: Ribosomal RNA large subunit methyltransferase K/L (717 aa).

A THUMP domain is found at 44 to 155 (DAYKVCIYSY…KQFVNVFLCL (112 aa)).

It belongs to the methyltransferase superfamily. RlmKL family.

The protein resides in the cytoplasm. The enzyme catalyses guanosine(2445) in 23S rRNA + S-adenosyl-L-methionine = N(2)-methylguanosine(2445) in 23S rRNA + S-adenosyl-L-homocysteine + H(+). The catalysed reaction is guanosine(2069) in 23S rRNA + S-adenosyl-L-methionine = N(2)-methylguanosine(2069) in 23S rRNA + S-adenosyl-L-homocysteine + H(+). Functionally, specifically methylates the guanine in position 2445 (m2G2445) and the guanine in position 2069 (m7G2069) of 23S rRNA. The sequence is that of Ribosomal RNA large subunit methyltransferase K/L from Francisella tularensis subsp. holarctica (strain FTNF002-00 / FTA).